The sequence spans 165 residues: Protein YELLOW LEAF 1, choloroplastic (165 aa).

A chloroplast-targeting transit peptide spans 1-51; the sequence is MPPLATMSSPGSLLLLTPAVYQGIGRNRGGQSQEGQSISSSRSLKTKLSVS. Residues 71–118 form a disordered region; that stretch reads TQTARRKSFSGPTSPPSGSVKEKVRSPKLDDGGTGFPPFRFGGGGGGG. Low complexity predominate over residues 79-89; it reads FSGPTSPPSGS. A compositionally biased stretch (basic and acidic residues) spans 90–101; that stretch reads VKEKVRSPKLDD.

Interacts with atpB. Highly expressed in leaves. Expressed in leaf sheaths. Expressed at low levels in stems.

The protein resides in the plastid. Its subcellular location is the chloroplast. Functionally, required for photosynthetic protein complex assembly in chloroplast thylakoid membranes during leaf development. Maintains the abundance of the core protein complex PsaA-PsaB of photosystem I (PSI) in the thylakoid membrane. May play a role in the efficient biogenesis of the chloroplast ATP synthase complex, possibly by interacting with the beta subunit atpB. This chain is Protein YELLOW LEAF 1, choloroplastic, found in Oryza sativa subsp. japonica (Rice).